A 184-amino-acid chain; its full sequence is Pyridoxal 5'-phosphate synthase subunit PdxT (184 aa).

46–48 (GES) contacts L-glutamine. C75 (nucleophile) is an active-site residue. Residues R101 and 129–130 (IR) contribute to the L-glutamine site. Catalysis depends on charge relay system residues H165 and E167.

This sequence belongs to the glutaminase PdxT/SNO family. In the presence of PdxS, forms a dodecamer of heterodimers. Only shows activity in the heterodimer.

It catalyses the reaction aldehydo-D-ribose 5-phosphate + D-glyceraldehyde 3-phosphate + L-glutamine = pyridoxal 5'-phosphate + L-glutamate + phosphate + 3 H2O + H(+). The enzyme catalyses L-glutamine + H2O = L-glutamate + NH4(+). It functions in the pathway cofactor biosynthesis; pyridoxal 5'-phosphate biosynthesis. Functionally, catalyzes the hydrolysis of glutamine to glutamate and ammonia as part of the biosynthesis of pyridoxal 5'-phosphate. The resulting ammonia molecule is channeled to the active site of PdxS. The protein is Pyridoxal 5'-phosphate synthase subunit PdxT of Staphylococcus haemolyticus (strain JCSC1435).